We begin with the raw amino-acid sequence, 380 residues long: Tryptophan 2,3-dioxygenase (380 aa).

Substrate contacts are provided by residues 57-61 (FIITH) and Arg128. His313 lines the heme pocket. Thr328 contacts substrate.

Belongs to the tryptophan 2,3-dioxygenase family. In terms of assembly, homotetramer. Dimer of dimers. Heme is required as a cofactor.

The catalysed reaction is L-tryptophan + O2 = N-formyl-L-kynurenine. The protein operates within amino-acid degradation; L-tryptophan degradation via kynurenine pathway; L-kynurenine from L-tryptophan: step 1/2. Its pathway is pigment biosynthesis; ommochrome biosynthesis. Heme-dependent dioxygenase that catalyzes the oxidative cleavage of the L-tryptophan (L-Trp) pyrrole ring and converts L-tryptophan to N-formyl-L-kynurenine. Catalyzes the oxidative cleavage of the indole moiety. This chain is Tryptophan 2,3-dioxygenase, found in Drosophila mojavensis (Fruit fly).